The chain runs to 178 residues: Endothelin-2 (178 aa).

Positions 1-24 (MVSVPTAWCSVALALLVALHEGKD) are cleaved as a signal peptide. Residues 25–46 (QAAATLEQPASSPRARAAHLRL) constitute a propeptide that is removed on maturation. Cystine bridges form between Cys-49–Cys-63 and Cys-51–Cys-59. The propeptide occupies 70-178 (VNTPGQTAPY…RTTHSRHRKR (109 aa)). The endothelin-like stretch occupies residues 96-111 (CECSSARDPACATFCH). The disordered stretch occupies residues 154 to 178 (KTHFAKRQQEATREPRTTHSRHRKR). The span at 160–170 (RQQEATREPRT) shows a compositional bias: basic and acidic residues.

Belongs to the endothelin/sarafotoxin family.

Its subcellular location is the secreted. Its function is as follows. Endothelins are endothelium-derived vasoconstrictor peptides. This Oryctolagus cuniculus (Rabbit) protein is Endothelin-2 (EDN2).